Reading from the N-terminus, the 448-residue chain is Squalene synthase ERG9 (448 aa).

The helical transmembrane segment at 428-448 threads the bilayer; it reads CNVVLFGIGALILSLIYFVLY.

The protein belongs to the phytoene/squalene synthase family. Mg(2+) is required as a cofactor.

Its subcellular location is the endoplasmic reticulum membrane. The protein localises to the microsome. The catalysed reaction is 2 (2E,6E)-farnesyl diphosphate + NADPH + H(+) = squalene + 2 diphosphate + NADP(+). It catalyses the reaction 2 (2E,6E)-farnesyl diphosphate + NADH + H(+) = squalene + 2 diphosphate + NAD(+). It functions in the pathway terpene metabolism; lanosterol biosynthesis; lanosterol from farnesyl diphosphate: step 1/3. In terms of biological role, squalene synthase; part of the third module of ergosterol biosynthesis pathway that includes the late steps of the pathway. ERG9 produces squalene from 2 farnesyl pyrophosphate moieties. The third module or late pathway involves the ergosterol synthesis itself through consecutive reactions that mainly occur in the endoplasmic reticulum (ER) membrane. Firstly, the squalene synthase ERG9 catalyzes the condensation of 2 farnesyl pyrophosphate moieties to form squalene, which is the precursor of all steroids. Squalene synthase is crucial for balancing the incorporation of farnesyl diphosphate (FPP) into sterol and nonsterol isoprene synthesis. Secondly, the squalene epoxidase ERG1 catalyzes the stereospecific oxidation of squalene to (S)-2,3-epoxysqualene, which is considered to be a rate-limiting enzyme in steroid biosynthesis. Then, the lanosterol synthase ERG7 catalyzes the cyclization of (S)-2,3 oxidosqualene to lanosterol, a reaction that forms the sterol core. In the next steps, lanosterol is transformed to zymosterol through a complex process involving various demethylation, reduction and desaturation reactions. The lanosterol 14-alpha-demethylase ERG11 (also known as CYP51) catalyzes C14-demethylation of lanosterol to produce 4,4'-dimethyl cholesta-8,14,24-triene-3-beta-ol, which is critical for ergosterol biosynthesis. The C-14 reductase ERG24 reduces the C14=C15 double bond of 4,4-dimethyl-cholesta-8,14,24-trienol to produce 4,4-dimethyl-cholesta-8,24-dienol. 4,4-dimethyl-cholesta-8,24-dienol is substrate of the C-4 demethylation complex ERG25-ERG26-ERG27 in which ERG25 catalyzes the three-step monooxygenation required for the demethylation of 4,4-dimethyl and 4alpha-methylsterols, ERG26 catalyzes the oxidative decarboxylation that results in a reduction of the 3-beta-hydroxy group at the C-3 carbon to an oxo group, and ERG27 is responsible for the reduction of the keto group on the C-3. ERG28 has a role as a scaffold to help anchor ERG25, ERG26 and ERG27 to the endoplasmic reticulum and ERG29 regulates the activity of the iron-containing C4-methylsterol oxidase ERG25. Then, the sterol 24-C-methyltransferase ERG6 catalyzes the methyl transfer from S-adenosyl-methionine to the C-24 of zymosterol to form fecosterol. The C-8 sterol isomerase ERG2 catalyzes the reaction which results in unsaturation at C-7 in the B ring of sterols and thus converts fecosterol to episterol. The sterol-C5-desaturase ERG3 then catalyzes the introduction of a C-5 double bond in the B ring to produce 5-dehydroepisterol. The C-22 sterol desaturase ERG5 further converts 5-dehydroepisterol into ergosta-5,7,22,24(28)-tetraen-3beta-ol by forming the C-22(23) double bond in the sterol side chain. Finally, ergosta-5,7,22,24(28)-tetraen-3beta-ol is substrate of the C-24(28) sterol reductase ERG4 to produce ergosterol. This is Squalene synthase ERG9 from Candida albicans (strain SC5314 / ATCC MYA-2876) (Yeast).